A 471-amino-acid chain; its full sequence is Citrate synthase, mitochondrial (471 aa).

Active-site residues include histidine 309, histidine 355, and aspartate 409.

Belongs to the citrate synthase family. In terms of assembly, homodimer. In terms of tissue distribution, ubiquitous.

It is found in the mitochondrion matrix. The catalysed reaction is oxaloacetate + acetyl-CoA + H2O = citrate + CoA + H(+). Its pathway is carbohydrate metabolism; tricarboxylic acid cycle; isocitrate from oxaloacetate: step 1/2. This Solanum tuberosum (Potato) protein is Citrate synthase, mitochondrial.